We begin with the raw amino-acid sequence, 276 residues long: Cell division protein FtsQ (276 aa).

Over 1–27 (MSQAALNTRNSEEEVSSRRNNGTRLAG) the chain is Cytoplasmic. The helical transmembrane segment at 28–48 (ILFLLTVLTTVLVSGWVVLGW) threads the bilayer. Over 49-276 (MEDAQRLPLS…QQNQAQAEQQ (228 aa)) the chain is Periplasmic. Residues 55–126 (LPLSKLVLTG…DELKIHLVEY (72 aa)) form the POTRA domain. The segment at 255–276 (GWAPLPPEESTQQQNQAQAEQQ) is disordered. Residues 266-276 (QQQNQAQAEQQ) show a composition bias toward low complexity.

Belongs to the FtsQ/DivIB family. FtsQ subfamily. Part of a complex composed of FtsB, FtsL and FtsQ. The complex can be formed before its localization to the division site. This tripartite complex can be divided further into a subcomplex of FtsB and FtsL, which forms in the absence of FtsQ. Interacts with FtsA, FtsK, FtsL, FtsB, FtsW, FtsI, FtsN, FtsX and YmgF.

The protein localises to the cell inner membrane. In terms of biological role, essential cell division protein. May link together the upstream cell division proteins, which are predominantly cytoplasmic, with the downstream cell division proteins, which are predominantly periplasmic. May control correct divisome assembly. This Escherichia coli (strain K12) protein is Cell division protein FtsQ.